The sequence spans 953 residues: Nonsense-mediated mRNA decay factor SMG8 (953 aa).

Disordered regions lie at residues 571–604 and 629–653; these read AEDA…CSQP and PCFD…ESNT. Residues 573 to 586 are compositionally biased toward acidic residues; it reads DAELDPDEEDEELP. Positions 595-604 are enriched in polar residues; that stretch reads ITQSNGCSQP. Residues 634-653 are compositionally biased toward low complexity; that stretch reads SSSSEAESTCSGTSSEESNT.

The protein belongs to the SMG8 family.

Functionally, involved in nonsense-mediated decay (NMD) of mRNAs containing premature stop codons. Probable component of kinase complex containing nonC and recruited to stalled ribosomes. This Drosophila pseudoobscura pseudoobscura (Fruit fly) protein is Nonsense-mediated mRNA decay factor SMG8.